We begin with the raw amino-acid sequence, 369 residues long: Ferredoxin--NADP reductase 2 (369 aa).

The interval 1–21 (MDLSIPNPVADATRQVEGGSP) is disordered. FAD is bound by residues Asp-58, Gln-66, Tyr-71, Val-111, Phe-146, Asp-311, and Thr-352.

The protein belongs to the ferredoxin--NADP reductase type 2 family. As to quaternary structure, homodimer. The cofactor is FAD.

The enzyme catalyses 2 reduced [2Fe-2S]-[ferredoxin] + NADP(+) + H(+) = 2 oxidized [2Fe-2S]-[ferredoxin] + NADPH. This chain is Ferredoxin--NADP reductase 2, found in Cupriavidus taiwanensis (strain DSM 17343 / BCRC 17206 / CCUG 44338 / CIP 107171 / LMG 19424 / R1) (Ralstonia taiwanensis (strain LMG 19424)).